The chain runs to 2291 residues: Spectrin beta chain (2291 aa).

The segment at 1-271 (MTTDISIVRW…IITYVVTYYH (271 aa)) is actin-binding. 2 consecutive Calponin-homology (CH) domains span residues 50-154 (SVQK…LRFQ) and 169-274 (KSAK…HYFS). Spectrin repeat units follow at residues 300-408 (VHDY…ALRE), 420-521 (AARF…MRLE), 525-633 (QLQQ…RLEE), 636-739 (KLWQ…RLEN), 743-843 (YFQL…QRLL), 848-948 (LYKL…MDDL), 954-1057 (VQTF…KLEE), 1060-1166 (DLHR…VLLS), 1170-1272 (DQQL…EKLK), 1276-1376 (KLHE…GAML), 1386-1484 (QQTC…KALE), 1488-1591 (EAFQ…HLLE), 1594-1697 (KVQQ…RLNE), 1701-1802 (LFML…TQML), 1807-1909 (ELHK…QKLA), 1913-2015 (DLFR…ENLQ), and 2020-2089 (VYQF…KEMK). Positions 2097 to 2140 (EAERQRIKEEQEAKAASEAAEQAKREAERRDDVDVGASHDDSER) are enriched in basic and acidic residues. Residues 2097–2152 (EAERQRIKEEQEAKAASEAAEQAKREAERRDDVDVGASHDDSERGGTPGAGEGHEG) form a disordered region. The PH domain occupies 2147–2259 (GEGHEGYVTR…WVTSLKAQSD (113 aa)). Phosphoserine is present on Ser2195. Polar residues predominate over residues 2262 to 2275 (AVAASRSQTLPATS). The segment at 2262 to 2291 (AVAASRSQTLPATSQKDEPKRRSFFTLKKK) is disordered.

This sequence belongs to the spectrin family. Native spectrin molecule is a tetramer composed of two antiparallel heterodimers joined head to head so that each end of the native molecule includes the C-terminus of the alpha subunit and the N-terminus of the beta subunit.

Its subcellular location is the cytoplasm. The protein localises to the cytoskeleton. It localises to the cell cortex. Functionally, spectrin is the major constituent of the cytoskeletal network underlying the erythrocyte plasma membrane. It associates with band 4.1 and actin to form the cytoskeletal superstructure of the erythrocyte plasma membrane. Interacts with calmodulin in a calcium-dependent manner. The polypeptide is Spectrin beta chain (beta-Spec) (Drosophila melanogaster (Fruit fly)).